A 355-amino-acid polypeptide reads, in one-letter code: MSFSDNLVKILDKYENLGKKLSSGIIGDEFVKASKEYAELEDVVVKIKQYNKAKSELEEANNFRLEMALDNATLEMIDNEIHTLENLLPKLERAVRISLLPKDEADSKSAIIEVRAGSGGEEAALFAAVLFNMYQRYSEFKGWRFEILAISDTGIGGYKEASASIKGKDVFSKLKFESGVHRVQRIPETESQGRIHTSAATVAVLPEAEGIDIKIEDKDLRIDTYRASGAGGQHVNTTDSAVRITHIPTGITVALQDEKSQHKNKAKALKILRARLYEEKRRQKEQERSDSRRGQVGSGDRSERIRTYNFPQGRVSDHRINLTLYKIDEVVKHGQLDEFIEALIANDEAKKLSEL.

Gln233 is modified (N5-methylglutamine). Over residues 280–293 (KRRQKEQERSDSRR) the composition is skewed to basic and acidic residues. The segment at 280 to 310 (KRRQKEQERSDSRRGQVGSGDRSERIRTYNF) is disordered.

This sequence belongs to the prokaryotic/mitochondrial release factor family. In terms of processing, methylated by PrmC. Methylation increases the termination efficiency of RF1.

It is found in the cytoplasm. In terms of biological role, peptide chain release factor 1 directs the termination of translation in response to the peptide chain termination codons UAG and UAA. This Rickettsia prowazekii (strain Madrid E) protein is Peptide chain release factor 1 (prfA).